A 476-amino-acid polypeptide reads, in one-letter code: Glutamate--tRNA ligase (476 aa).

Residues 9–19 (PSPTGTLHLGT) carry the 'HIGH' region motif. Residues 248 to 252 (KLSKR) carry the 'KMSKS' region motif. An ATP-binding site is contributed by Lys251.

The protein belongs to the class-I aminoacyl-tRNA synthetase family. Glutamate--tRNA ligase type 1 subfamily. Monomer.

Its subcellular location is the cytoplasm. It carries out the reaction tRNA(Glu) + L-glutamate + ATP = L-glutamyl-tRNA(Glu) + AMP + diphosphate. Functionally, catalyzes the attachment of glutamate to tRNA(Glu) in a two-step reaction: glutamate is first activated by ATP to form Glu-AMP and then transferred to the acceptor end of tRNA(Glu). This is Glutamate--tRNA ligase from Prochlorococcus marinus (strain NATL1A).